Consider the following 438-residue polypeptide: Cobyrinate a,c-diamide synthase (438 aa).

Residues 242–426 enclose the GATase cobBQ-type domain; it reads TIAIARDAAF…FHAYFSSCPA (185 aa). Cys325 functions as the Nucleophile in the catalytic mechanism.

The protein belongs to the CobB/CbiA family. Mg(2+) is required as a cofactor.

The enzyme catalyses cob(II)yrinate + 2 L-glutamine + 2 ATP + 2 H2O = cob(II)yrinate a,c diamide + 2 L-glutamate + 2 ADP + 2 phosphate + 2 H(+). It functions in the pathway cofactor biosynthesis; adenosylcobalamin biosynthesis; cob(II)yrinate a,c-diamide from sirohydrochlorin (anaerobic route): step 10/10. Its function is as follows. Catalyzes the ATP-dependent amidation of the two carboxylate groups at positions a and c of cobyrinate, using either L-glutamine or ammonia as the nitrogen source. This chain is Cobyrinate a,c-diamide synthase, found in Herminiimonas arsenicoxydans.